Reading from the N-terminus, the 128-residue chain is Ribonuclease P protein component (128 aa).

This sequence belongs to the RnpA family. Consists of a catalytic RNA component (M1 or rnpB) and a protein subunit.

The catalysed reaction is Endonucleolytic cleavage of RNA, removing 5'-extranucleotides from tRNA precursor.. Its function is as follows. RNaseP catalyzes the removal of the 5'-leader sequence from pre-tRNA to produce the mature 5'-terminus. It can also cleave other RNA substrates such as 4.5S RNA. The protein component plays an auxiliary but essential role in vivo by binding to the 5'-leader sequence and broadening the substrate specificity of the ribozyme. The chain is Ribonuclease P protein component from Prochlorococcus marinus (strain MIT 9312).